The chain runs to 199 residues: MTEEQVLNTHNAEILLSAANKSHYPQDDLPEVALAGRSNVGKSSFINTLLGRKNLARTSGKPGKTQLLNFYNIDDKLRFVDVPGYGYARVSKKERAKWGKMIEEYLVTRDNLRVVVSLVDLRHEPTQDDIQMYEFLKYYEIPVIVVATKADKIPRGKWNKHESIIKKKLNFDKNDHFIVFSSVTRDGYDEAWDTILAEL.

Residues 28–199 (DLPEVALAGR…EAWDTILAEL (172 aa)) enclose the EngB-type G domain. Residues 36–43 (GRSNVGKS), 63–67 (GKTQL), 81–84 (DVPG), 148–151 (TKAD), and 180–182 (FSS) contribute to the GTP site. Residues serine 43 and threonine 65 each coordinate Mg(2+).

It belongs to the TRAFAC class TrmE-Era-EngA-EngB-Septin-like GTPase superfamily. EngB GTPase family. The cofactor is Mg(2+).

Its function is as follows. Necessary for normal cell division and for the maintenance of normal septation. This is Probable GTP-binding protein EngB from Streptococcus thermophilus (strain CNRZ 1066).